A 312-amino-acid polypeptide reads, in one-letter code: Tumor necrosis factor receptor type 1-associated DEATH domain protein (312 aa).

The Nuclear export signal motif lies at 147 to 163 (LRDEELTELENALRNLT). Residues 166-200 (SAGGQGSDVQGTPAPLQSLAPSPPEEKPPPPQPGQ) form a disordered region. The Death domain maps to 215–305 (NLQDQQKFAR…SLAEDLLGLA (91 aa)). The tract at residues 222–289 (FARSVGLKWR…ATLQRLVEAL (68 aa)) is interaction with KRT14 and KRT18. Positions 231–244 (RKVGRSLQRSCRAL) match the Nuclear localization signal motif.

In terms of assembly, stimulation of TNF-alpha receptor TNFRSF1A leads to the formation of two distinct signaling complexes. Plasma membrane-bound complex I is composed of TNFRSF1A, TRADD, RIPK1, TRAF2 and BIRC2/c-IAP1 or BIRC3 which interacts with CHUCK/IKK-alpha, IKBKB/IKK-beta and IKBKG/IKK-gamma promoting cell survival. Subsequently, TRADD, RIPK1 and TRAF2 dissociate from TNFRSF1A and form cytoplasmic complex II with FADD and caspase CASP8 promoting cell apoptosis. Within complex I, interacts with TNFRSF1A/TNFR1, TRAF2 and kinase RIPK1. Within complex I, interacts with TRPC4AP; the interaction promotes NF-kappa B activation. UXT1 associates with complex I; the interaction prevents the formation of complex II. Within complex I Interacts with scaffold protein DAB2IP. Interacts with autophagy receptor SQSTM1. Interacts with E3 ligase TRIP12. Interacts with kinase HIPK2. Interacts with keratin KRT14. Interacts with keratin KRT18. Interacts with keratins KRT16 and KRT17. Interacts with FADD. Interacts with TOMM70. Interacts with TMC8; the interaction impairs the formation of complex I and facilites complex II formation.

Its subcellular location is the nucleus. The protein resides in the cytoplasm. It is found in the cytoskeleton. Functionally, adapter molecule for TNFRSF1A/TNFR1 that specifically associates with the cytoplasmic domain of activated TNFRSF1A/TNFR1 mediating its interaction with FADD. Overexpression of TRADD leads to two major TNF-induced responses, apoptosis and activation of NF-kappa-B. The nuclear form acts as a tumor suppressor by preventing ubiquitination and degradation of isoform p19ARF/ARF of CDKN2A by TRIP12: acts by interacting with TRIP12, leading to disrupt interaction between TRIP12 and isoform p19ARF/ARF of CDKN2A. In Bos taurus (Bovine), this protein is Tumor necrosis factor receptor type 1-associated DEATH domain protein.